We begin with the raw amino-acid sequence, 204 residues long: Phosphopantothenoylcysteine decarboxylase (204 aa).

FMN-binding positions include F59 and D104 to T107. N140 is a binding site for substrate. C173 acts as the Proton donor in catalysis.

Belongs to the HFCD (homooligomeric flavin containing Cys decarboxylase) superfamily. As to quaternary structure, homotrimer. The cofactor is FMN.

It catalyses the reaction N-[(R)-4-phosphopantothenoyl]-L-cysteine + H(+) = (R)-4'-phosphopantetheine + CO2. The protein operates within cofactor biosynthesis; coenzyme A biosynthesis; CoA from (R)-pantothenate: step 3/5. In terms of biological role, catalyzes the decarboxylation of the cysteine moiety of 4-phosphopantothenoylcysteine to form 4'-phosphopantotheine and this reaction forms part of the biosynthesis of coenzyme A. The chain is Phosphopantothenoylcysteine decarboxylase (PPCDC) from Homo sapiens (Human).